The following is a 247-amino-acid chain: uncharacterized protein (247 aa).

A run of 6 helical transmembrane segments spans residues 19–39 (IFFTFLLCFIICTIYSESIMF), 73–93 (FFTSIYCTFPYFFYQFWAFFI), 106–126 (FLSFFFFTLLFFSCIIIYFII), 155–175 (YIQFTFQIFSYFFVLFQCPLF), 196–216 (YIYFLFLILAAFLSPPDILSQ), and 217–237 (FFLFSLIVFMYELCVFYSCFY).

The protein belongs to the TatC family.

The protein resides in the mitochondrion membrane. This is an uncharacterized protein from Nephroselmis olivacea (Green alga).